We begin with the raw amino-acid sequence, 470 residues long: Sugar transporter ERD6-like 8 (470 aa).

The span at 1-16 shows a compositional bias: basic and acidic residues; the sequence is METRKDDMEKRNDKSE. Positions 1-24 are disordered; the sequence is METRKDDMEKRNDKSEPLLLPENG. The next 12 membrane-spanning stretches (helical) occupy residues 33–53, 73–93, 110–130, 133–153, 164–184, 188–208, 270–290, 307–327, 335–355, 373–393, 409–429, and 434–454; these read WMVYLSTIIAVCGSYEFGTCV, QFSVFGSILNMGAVLGAITSG, VISAIGWLIIYLAKGDVPLDF, FLTGYGCGTLSFVVPVFIAEI, TLNQLFIVIGLASMFLIGAVV, TLALTGVAPCVVLFFGTWFIP, FVIVGVGLMFFQQFVGINGVI, GSILYSIEQVVLTALGATLLI, LLMASAVGMLIGCLLIGNSFL, GVLVYIGSFSIGMGAIPWVIM, VTVVNWLSSWLVSFTFNFLMI, and GTFYVYGGVCVLAIIFIAKLV.

Belongs to the major facilitator superfamily. Sugar transporter (TC 2.A.1.1) family.

The protein localises to the membrane. Sugar transporter. This is Sugar transporter ERD6-like 8 from Arabidopsis thaliana (Mouse-ear cress).